The following is a 305-amino-acid chain: Catechol 1,2-dioxygenase (305 aa).

Fe cation contacts are provided by Tyr163, Tyr197, His221, and His223.

This sequence belongs to the intradiol ring-cleavage dioxygenase family. Homodimer. Requires Fe(3+) as cofactor.

It catalyses the reaction catechol + O2 = cis,cis-muconate + 2 H(+). It participates in aromatic compound metabolism; beta-ketoadipate pathway; 5-oxo-4,5-dihydro-2-furylacetate from catechol: step 1/3. This chain is Catechol 1,2-dioxygenase (catA), found in Acinetobacter guillouiae (Acinetobacter genomosp. 11).